The sequence spans 633 residues: Proline-rich receptor-like protein kinase PERK4 (633 aa).

Low complexity predominate over residues 1-29; the sequence is MASSPESAPPTNSTSSPSPPSNTNSTTSS. Residues 1–145 form a disordered region; that stretch reads MASSPESAPP…GSSGGGGGGR (145 aa). Residues 1 to 151 are Extracellular-facing; sequence MASSPESAPP…GGGRSNTNTA (151 aa). Residues asparagine 12 and asparagine 24 are each glycosylated (N-linked (GlcNAc...) asparagine). Pro residues-rich tracts occupy residues 30 to 41 and 48 to 65; these read PPAPSPPSPTPP and SPPP…PNPP. The N-linked (GlcNAc...) asparagine glycan is linked to asparagine 66. Residues 77–90 are compositionally biased toward gly residues; the sequence is QGGGGERGNGGNNG. Positions 106-135 are enriched in low complexity; sequence SRSNGDNGGSRSSPPGDTGGSRSDNPPSSG. Positions 136–145 are enriched in gly residues; the sequence is GSSGGGGGGR. Residues 152-172 traverse the membrane as a helical segment; the sequence is IIVGVLVGAGLLMIVLIIVCL. Topologically, residues 173–633 are cytoplasmic; that stretch reads RRKKKRKDSF…MGTKSPTPPK (461 aa). Over residues 193 to 222 the composition is skewed to low complexity; the sequence is QYYGNNNNNNASQNYPNWHLNSQGQNQQST. The interval 193–255 is disordered; that stretch reads QYYGNNNNNN…SMYSGPSRPV (63 aa). Threonine 273 carries the post-translational modification Phosphothreonine. In terms of domain architecture, Protein kinase spans 284-562; sequence FTDANLLGQG…VRALEGEVSL (279 aa). ATP contacts are provided by residues 290–298 and lysine 312; that span reads LGQGGFGYV. A Phosphotyrosine modification is found at tyrosine 357. Catalysis depends on aspartate 408, which acts as the Proton acceptor. The residue at position 441 (serine 441) is a Phosphoserine. Threonine 442 and threonine 447 each carry phosphothreonine. Tyrosine 455 bears the Phosphotyrosine mark. Residues 608–619 show a composition bias toward polar residues; sequence FPVSDCEGTSSN. The tract at residues 608 to 633 is disordered; that stretch reads FPVSDCEGTSSNDSRDMGTKSPTPPK.

This sequence belongs to the protein kinase superfamily. Ser/Thr protein kinase family. Mostly expressed in inflorescence bolts. Also present in roots, stems, germinated seeds, cotyledons, pollen, stamen and stigma.

The protein resides in the cell membrane. The enzyme catalyses L-seryl-[protein] + ATP = O-phospho-L-seryl-[protein] + ADP + H(+). It catalyses the reaction L-threonyl-[protein] + ATP = O-phospho-L-threonyl-[protein] + ADP + H(+). With respect to regulation, activated by ABA and Ca(2+). Required during abscisic acid (ABA)-mediated activation of Ca(2+) channels. Regulates ABA signaling pathways. Modulates the expression of genes related to cell elongation and ABA signaling during root growth. This Arabidopsis thaliana (Mouse-ear cress) protein is Proline-rich receptor-like protein kinase PERK4 (PERK4).